A 165-amino-acid polypeptide reads, in one-letter code: Phosphopantetheine adenylyltransferase (165 aa).

T11 is a substrate binding site. Residues 11-12 (TF) and H19 each bind ATP. K43, T79, and R93 together coordinate substrate. ATP is bound by residues E104 and 128-134 (LEPLNST).

This sequence belongs to the bacterial CoaD family. As to quaternary structure, homohexamer. Mg(2+) serves as cofactor.

It is found in the cytoplasm. The catalysed reaction is (R)-4'-phosphopantetheine + ATP + H(+) = 3'-dephospho-CoA + diphosphate. Its pathway is cofactor biosynthesis; coenzyme A biosynthesis; CoA from (R)-pantothenate: step 4/5. In terms of biological role, reversibly transfers an adenylyl group from ATP to 4'-phosphopantetheine, yielding dephospho-CoA (dPCoA) and pyrophosphate. The protein is Phosphopantetheine adenylyltransferase of Lactococcus lactis subsp. lactis (strain IL1403) (Streptococcus lactis).